Here is a 191-residue protein sequence, read N- to C-terminus: 3-isopropylmalate dehydratase small subunit (191 aa).

This sequence belongs to the LeuD family. LeuD type 1 subfamily. Heterodimer of LeuC and LeuD.

It carries out the reaction (2R,3S)-3-isopropylmalate = (2S)-2-isopropylmalate. It functions in the pathway amino-acid biosynthesis; L-leucine biosynthesis; L-leucine from 3-methyl-2-oxobutanoate: step 2/4. In terms of biological role, catalyzes the isomerization between 2-isopropylmalate and 3-isopropylmalate, via the formation of 2-isopropylmaleate. The polypeptide is 3-isopropylmalate dehydratase small subunit (Anaeromyxobacter dehalogenans (strain 2CP-1 / ATCC BAA-258)).